A 1015-amino-acid chain; its full sequence is MSGGLFYNPFLRPNKGLLKKPDKEYLRLIPKCFQTPGAAGVVDVRGPQTPLCFYQDSLTVVGGDEDGKGMWWRQRAQEGTARPEADTHGSPLDFHVYDILETVYTHEKCAVIPSDKQGYVVPCGIVIKLLGRRKADGASVCVNVFGQQAYFYASAPQGLDVEFAVLSALKASTFDRRTPCRVSVEKVTRRSIMGYGNHAGDYHKITLSHPNSVCHVATWLQDKHGCRIFEANVDATRRFVLDNDFVTFGWYSCRRAIPRLQHRDSYAELEYDCEVGDLSVRREDSSWPSYQALAFDIECLGEEGFPTATNEADLILQISCVLWSTGEEAGRYRRILLTLGTCEDIEGVEVYEFPSELDMLYAFFQLIRDLSVEIVTGYNVANFDWPYILDRARHIYSINPASLGKIRAGGVCEVRRPHDAGKGFLRANTKVRITGLIPIDMYAVCRDKLSLSDYKLDTVARHLLGAKKEDVHYKEIPRLFAAGPEGRRRLGMYCVQDSALVMDLLNHFVIHVEVAEIAKIAHIPCRRVLDDGQQIRVFSCLLAAAQKENFILPMPSASDRDGYQGATVIQPLSGFYNSPVLVVDFASLYPSIIQAHNLCYSTMITPGEEHRLAGLRPGEDYESFRLTGGVYHFVKKHVHESFLASLLTSWLAKRKAIKKLLAACEDPRQRTILDKQQLAIKCTCNAVYGFTGVANGLFPCLSIAETVTLQGRTMLERAKAFVEALSPANLQALAPSPDAWAPLNPEGQLRVIYGDTDSLFIECRGFSESETLRFAEALAAHTTRSLFVAPISLEAEKTFSCLMLITKKRYVGVLTDGKTLMKGVELVRKTACKFVQTRCRRVLDLVLADARVKEAASLLSHRPFQESFTQGLPVGFLPVIDILNQAYTDLREGRVPMGELCFSTELSRKLSAYKSTQMPHLAVYQKFVERNEELPQIHDRIQYVFVEPKGGVKGARKTEMAEDPAYAERHGVPVAVDHYFDKLLQGAANILQCLFDNNSGAALSVLQNFTARPPF.

This sequence belongs to the DNA polymerase type-B family. As to quaternary structure, forms a complex with the major DNA-binding protein BALF2, the DNA polymerase processivity factor BMRF1, and the alkaline exonuclease BGLF5. Interacts with the putative helicase-primase complex composed of BBLF4, BSLF1 and BBLF2/3 proteins; these interactions may coordinate leading and lagging strand DNA synthesis at the replication fork.

The protein resides in the host nucleus. The catalysed reaction is DNA(n) + a 2'-deoxyribonucleoside 5'-triphosphate = DNA(n+1) + diphosphate. Replicates viral genomic DNA in the late phase of lytic infection, producing long concatemeric DNA. The replication complex is composed of six viral proteins: the DNA polymerase, processivity factor, primase, primase-associated factor, helicase, and ssDNA-binding protein. This chain is DNA polymerase catalytic subunit, found in Homo sapiens (Human).